Here is a 316-residue protein sequence, read N- to C-terminus: Ribosomal RNA small subunit methyltransferase H (316 aa).

S-adenosyl-L-methionine-binding positions include 35–37 (GGH), Asp55, Phe80, Asp102, and Gln109.

It belongs to the methyltransferase superfamily. RsmH family.

The protein resides in the cytoplasm. It catalyses the reaction cytidine(1402) in 16S rRNA + S-adenosyl-L-methionine = N(4)-methylcytidine(1402) in 16S rRNA + S-adenosyl-L-homocysteine + H(+). Functionally, specifically methylates the N4 position of cytidine in position 1402 (C1402) of 16S rRNA. This chain is Ribosomal RNA small subunit methyltransferase H, found in Colwellia psychrerythraea (strain 34H / ATCC BAA-681) (Vibrio psychroerythus).